Reading from the N-terminus, the 80-residue chain is Sulfur carrier protein TusA (80 aa).

Cys17 (cysteine persulfide intermediate) is an active-site residue.

This sequence belongs to the sulfur carrier protein TusA family.

The protein localises to the cytoplasm. Sulfur carrier protein which probably makes part of a sulfur-relay system. The sequence is that of Sulfur carrier protein TusA from Pseudomonas putida (strain ATCC 47054 / DSM 6125 / CFBP 8728 / NCIMB 11950 / KT2440).